The primary structure comprises 352 residues: MKPALLEVMRMNRICRMVLATCFGSFILVIFYFQSMLHPVMRRNPFGVDICCRKGSRSPLQELYNPIQLELSNTAILHQMRRDQVTDTCRANSAMSRKRRVLTPNDLKHLVVDEDHELIYCYVPKVACTNWKRLMMVLSGRGKYSDPMEIPANEAHVSANLKTLNQYSIPEINHRLKSYMKFLFVREPFERLVSAYRNKFTQKYNTSFHKRYGTKIIRRQRKNATQEALRKGDDVKFEEFVAYLIDPHTQREEPFNEHWQTVYSLCHPCHIHYDLVGKYETLEEDSNYVLQLAGVSGYLKFPTYAKSTRTTDEMTTEFFQNISAEHQTQLYEVYKLDFLMFNYSVPNYLKLD.

Residues methionine 1–arginine 16 are Cytoplasmic-facing. The chain crosses the membrane as a helical; Signal-anchor for type II membrane protein span at residues methionine 17 to leucine 37. Residues histidine 38 to aspartate 352 are Lumenal-facing. 3'-phosphoadenylyl sulfate is bound by residues proline 124–asparagine 130 and arginine 186–serine 194. N-linked (GlcNAc...) asparagine glycans are attached at residues asparagine 205, asparagine 223, asparagine 321, and asparagine 342.

Belongs to the sulfotransferase 2 family. N-glycosylated; required for activity and stability. In terms of tissue distribution, predominantly expressed in brain and kidney. Also expressed at weaker level in heart, spleen and lung. Expressed in developing chondrocytes.

Its subcellular location is the golgi apparatus membrane. The catalysed reaction is chondroitin beta-D-glucuronate + n 3'-phosphoadenylyl sulfate = chondroitin 4'-sulfate + n adenosine 3',5'-bisphosphate + n H(+). Functionally, catalyzes the transfer of sulfate to position 4 of the N-acetylgalactosamine (GalNAc) residue of chondroitin. Chondroitin sulfate constitutes the predominant proteoglycan present in cartilage and is distributed on the surfaces of many cells and extracellular matrices. Can also sulfate Gal residues in desulfated dermatan sulfate. Preferentially sulfates in GlcA-&gt;GalNAc unit than in IdoA-&gt;GalNAc unit. Does not form 4, 6-di-O-sulfated GalNAc when chondroitin sulfate C is used as an acceptor. This chain is Carbohydrate sulfotransferase 11 (Chst11), found in Mus musculus (Mouse).